The chain runs to 200 residues: Thymidine kinase (200 aa).

ATP is bound by residues 15 to 22 and 88 to 91; these read GPMYSGKS and DEVQ. Glu-89 (proton acceptor) is an active-site residue. Positions 145, 148, 177, and 180 each coordinate Zn(2+).

The protein belongs to the thymidine kinase family. As to quaternary structure, homotetramer.

It localises to the cytoplasm. The catalysed reaction is thymidine + ATP = dTMP + ADP + H(+). This is Thymidine kinase from Mycoplasma mobile (strain ATCC 43663 / 163K / NCTC 11711) (Mesomycoplasma mobile).